Reading from the N-terminus, the 89-residue chain is Small ribosomal subunit protein uS15 (89 aa).

The protein belongs to the universal ribosomal protein uS15 family. Part of the 30S ribosomal subunit. Forms a bridge to the 50S subunit in the 70S ribosome, contacting the 23S rRNA.

In terms of biological role, one of the primary rRNA binding proteins, it binds directly to 16S rRNA where it helps nucleate assembly of the platform of the 30S subunit by binding and bridging several RNA helices of the 16S rRNA. Its function is as follows. Forms an intersubunit bridge (bridge B4) with the 23S rRNA of the 50S subunit in the ribosome. This chain is Small ribosomal subunit protein uS15, found in Coxiella burnetii (strain CbuK_Q154) (Coxiella burnetii (strain Q154)).